The following is a 187-amino-acid chain: Cell division protein SepF (187 aa).

Residues 21 to 97 form a disordered region; it reads EVEVPDKQQQ…ATPNNASQES (77 aa). Polar residues-rich tracts occupy residues 38–63 and 70–97; these read EQSQQTTKQNAIKSVPQKSASRYTTT and RMSNYSKNNSRNVVTMNNATPNNASQES.

Belongs to the SepF family. Homodimer. Interacts with FtsZ.

It is found in the cytoplasm. Cell division protein that is part of the divisome complex and is recruited early to the Z-ring. Probably stimulates Z-ring formation, perhaps through the cross-linking of FtsZ protofilaments. Its function overlaps with FtsA. This chain is Cell division protein SepF, found in Staphylococcus aureus (strain MRSA252).